Here is a 399-residue protein sequence, read N- to C-terminus: Tryptophan synthase beta chain (399 aa).

Lys-92 bears the N6-(pyridoxal phosphate)lysine mark.

The protein belongs to the TrpB family. Tetramer of two alpha and two beta chains. The cofactor is pyridoxal 5'-phosphate.

The enzyme catalyses (1S,2R)-1-C-(indol-3-yl)glycerol 3-phosphate + L-serine = D-glyceraldehyde 3-phosphate + L-tryptophan + H2O. The protein operates within amino-acid biosynthesis; L-tryptophan biosynthesis; L-tryptophan from chorismate: step 5/5. In terms of biological role, the beta subunit is responsible for the synthesis of L-tryptophan from indole and L-serine. This chain is Tryptophan synthase beta chain, found in Exiguobacterium sibiricum (strain DSM 17290 / CCUG 55495 / CIP 109462 / JCM 13490 / 255-15).